Reading from the N-terminus, the 873-residue chain is Alanine--tRNA ligase (873 aa).

H559, H563, C661, and H665 together coordinate Zn(2+).

This sequence belongs to the class-II aminoacyl-tRNA synthetase family. Homotetramer. Zn(2+) is required as a cofactor.

The protein localises to the cytoplasm. The enzyme catalyses tRNA(Ala) + L-alanine + ATP = L-alanyl-tRNA(Ala) + AMP + diphosphate. Catalyzes the attachment of alanine to tRNA(Ala) in a two-step reaction: alanine is first activated by ATP to form Ala-AMP and then transferred to the acceptor end of tRNA(Ala). Also edits incorrectly charged Ser-tRNA(Ala) and Gly-tRNA(Ala) via its editing domain. This is Alanine--tRNA ligase from Wigglesworthia glossinidia brevipalpis.